Consider the following 180-residue polypeptide: Chromatin structure-remodeling complex protein RSC14 (180 aa).

Interacts with STH1, RSC3 and ARP9. Component of the two forms of the RSC complex composed of at least either RSC1 or RSC2, and ARP7, ARP9, LDB7, NPL6, RSC3, RSC30, RSC4, RSC58, RSC6, RSC8, RSC9, SFH1, STH1, HTL1 and probably RTT102. The complexes interact with histone and histone variant components of centromeric chromatin. Component of a fungal-specific module (HTL1-LDB7-NPL6-RSC3-RSC30) within the RSC complex.

It localises to the nucleus. Component of the chromatin structure-remodeling complex (RSC), which is involved in transcription regulation and nucleosome positioning. RSC is responsible for the transfer of a histone octamer from a nucleosome core particle to naked DNA. The reaction requires ATP and involves an activated RSC-nucleosome intermediate. Remodeling reaction also involves DNA translocation, DNA twist and conformational change. As a reconfigurer of centromeric and flanking nucleosomes, RSC complex is required both for proper kinetochore function in chromosome segregation and, via a PKC1-dependent signaling pathway, for organization of the cellular cytoskeleton. Together with HTL1, NPL6, RSC3, RSC30 components, defines a fungal-specific module within the RSC complex that plays a role in many cellular functions including the maintenance of cell wall integrity. May be involved in the transfer of mannosylphosphate (MP) groups into N-linked oligosaccharides. The sequence is that of Chromatin structure-remodeling complex protein RSC14 (LDB7) from Saccharomyces cerevisiae (strain ATCC 204508 / S288c) (Baker's yeast).